We begin with the raw amino-acid sequence, 509 residues long: ATP synthase subunit alpha (509 aa).

169 to 176 (GDRQTGKT) contributes to the ATP binding site.

This sequence belongs to the ATPase alpha/beta chains family. In terms of assembly, F-type ATPases have 2 components, CF(1) - the catalytic core - and CF(0) - the membrane proton channel. CF(1) has five subunits: alpha(3), beta(3), gamma(1), delta(1), epsilon(1). CF(0) has three main subunits: a(1), b(2) and c(9-12). The alpha and beta chains form an alternating ring which encloses part of the gamma chain. CF(1) is attached to CF(0) by a central stalk formed by the gamma and epsilon chains, while a peripheral stalk is formed by the delta and b chains.

It is found in the cell inner membrane. The enzyme catalyses ATP + H2O + 4 H(+)(in) = ADP + phosphate + 5 H(+)(out). Its function is as follows. Produces ATP from ADP in the presence of a proton gradient across the membrane. The alpha chain is a regulatory subunit. This Bradyrhizobium diazoefficiens (strain JCM 10833 / BCRC 13528 / IAM 13628 / NBRC 14792 / USDA 110) protein is ATP synthase subunit alpha.